We begin with the raw amino-acid sequence, 174 residues long: Cytochrome c-type biogenesis protein CcmE (174 aa).

The Cytoplasmic segment spans residues M1–R7. A helical; Signal-anchor for type II membrane protein membrane pass occupies residues L8 to A28. Topologically, residues L29 to P174 are periplasmic. Residues H121 and Y125 each coordinate heme. The segment covering V130–E144 has biased composition (basic and acidic residues). The interval V130–P174 is disordered. The segment covering P156–P174 has biased composition (low complexity).

Belongs to the CcmE/CycJ family.

The protein resides in the cell inner membrane. Functionally, heme chaperone required for the biogenesis of c-type cytochromes. Transiently binds heme delivered by CcmC and transfers the heme to apo-cytochromes in a process facilitated by CcmF and CcmH. The chain is Cytochrome c-type biogenesis protein CcmE from Azorhizobium caulinodans (strain ATCC 43989 / DSM 5975 / JCM 20966 / LMG 6465 / NBRC 14845 / NCIMB 13405 / ORS 571).